Reading from the N-terminus, the 299-residue chain is MATVIDGKNVAASVIQTVKSATAALEKASGVTTGLAVIIVGDDPASHAYVGSKSRMAKECGFKSVQHTLPAETTQEELAGLVATLNADPSIHGILVQLPLPKPLDSEPIIQSILPEKDVDGLSVVNAGKLATGDLKTGLVSCTPAGAMVFVRRTHGEDLSGLNAVVIGRSNLFGKPMAQLLLNANATVTIAHSRTKNLAEVCRNADILVAAVGRPEMVKADWVKPGATVIDVGINRVPAPEKGEGKTRLVGDVAFREVSEIASTITPVPGGVGPMTIAMLMANTVIAAHRAAGQTPPQF.

NADP(+) is bound by residues 168–170 (GRS), serine 193, and isoleucine 234.

The protein belongs to the tetrahydrofolate dehydrogenase/cyclohydrolase family. Homodimer.

It catalyses the reaction (6R)-5,10-methylene-5,6,7,8-tetrahydrofolate + NADP(+) = (6R)-5,10-methenyltetrahydrofolate + NADPH. It carries out the reaction (6R)-5,10-methenyltetrahydrofolate + H2O = (6R)-10-formyltetrahydrofolate + H(+). It functions in the pathway one-carbon metabolism; tetrahydrofolate interconversion. Catalyzes the oxidation of 5,10-methylenetetrahydrofolate to 5,10-methenyltetrahydrofolate and then the hydrolysis of 5,10-methenyltetrahydrofolate to 10-formyltetrahydrofolate. The sequence is that of Bifunctional protein FolD 1 from Rhizobium etli (strain ATCC 51251 / DSM 11541 / JCM 21823 / NBRC 15573 / CFN 42).